The primary structure comprises 453 residues: Bifunctional protein GlmU (453 aa).

The pyrophosphorylase stretch occupies residues 1-228 (MPHWAAVIMA…VHEALGINSR (228 aa)). UDP-N-acetyl-alpha-D-glucosamine is bound by residues Lys23, Gln73, 78–79 (GT), 100–102 (SGD), Gly139, Glu153, Asn168, and Asn226. Asp102 contributes to the Mg(2+) binding site. Asn226 contacts Mg(2+). The interval 229-249 (AQLAAAEDVARQRILSYWMEE) is linker. An N-acetyltransferase region spans residues 250 to 453 (GVTIIDPRST…IENWVRNKKK (204 aa)). 2 residues coordinate UDP-N-acetyl-alpha-D-glucosamine: Arg331 and Lys349. His361 (proton acceptor) is an active-site residue. UDP-N-acetyl-alpha-D-glucosamine is bound by residues Tyr364 and Asn375. Acetyl-CoA is bound by residues Ala378, 384–385 (NY), Ser403, Ala421, and Arg438.

In the N-terminal section; belongs to the N-acetylglucosamine-1-phosphate uridyltransferase family. It in the C-terminal section; belongs to the transferase hexapeptide repeat family. In terms of assembly, homotrimer. The cofactor is Mg(2+).

The protein resides in the cytoplasm. It carries out the reaction alpha-D-glucosamine 1-phosphate + acetyl-CoA = N-acetyl-alpha-D-glucosamine 1-phosphate + CoA + H(+). It catalyses the reaction N-acetyl-alpha-D-glucosamine 1-phosphate + UTP + H(+) = UDP-N-acetyl-alpha-D-glucosamine + diphosphate. The protein operates within nucleotide-sugar biosynthesis; UDP-N-acetyl-alpha-D-glucosamine biosynthesis; N-acetyl-alpha-D-glucosamine 1-phosphate from alpha-D-glucosamine 6-phosphate (route II): step 2/2. Its pathway is nucleotide-sugar biosynthesis; UDP-N-acetyl-alpha-D-glucosamine biosynthesis; UDP-N-acetyl-alpha-D-glucosamine from N-acetyl-alpha-D-glucosamine 1-phosphate: step 1/1. It participates in bacterial outer membrane biogenesis; LPS lipid A biosynthesis. Functionally, catalyzes the last two sequential reactions in the de novo biosynthetic pathway for UDP-N-acetylglucosamine (UDP-GlcNAc). The C-terminal domain catalyzes the transfer of acetyl group from acetyl coenzyme A to glucosamine-1-phosphate (GlcN-1-P) to produce N-acetylglucosamine-1-phosphate (GlcNAc-1-P), which is converted into UDP-GlcNAc by the transfer of uridine 5-monophosphate (from uridine 5-triphosphate), a reaction catalyzed by the N-terminal domain. The sequence is that of Bifunctional protein GlmU from Desulfitobacterium hafniense (strain Y51).